A 118-amino-acid chain; its full sequence is Nitrogenase-stabilizing/protective protein NifW (118 aa).

This sequence belongs to the NifW family. In terms of assembly, homotrimer; associates with NifD.

Its function is as follows. May protect the nitrogenase Fe-Mo protein from oxidative damage. The chain is Nitrogenase-stabilizing/protective protein NifW from Rhodopseudomonas palustris (strain BisB5).